The sequence spans 367 residues: 4-hydroxy-3-methylbut-2-en-1-yl diphosphate synthase (flavodoxin) (367 aa).

4 residues coordinate [4Fe-4S] cluster: Cys268, Cys271, Cys303, and Glu310.

Belongs to the IspG family. It depends on [4Fe-4S] cluster as a cofactor.

The enzyme catalyses (2E)-4-hydroxy-3-methylbut-2-enyl diphosphate + oxidized [flavodoxin] + H2O + 2 H(+) = 2-C-methyl-D-erythritol 2,4-cyclic diphosphate + reduced [flavodoxin]. The protein operates within isoprenoid biosynthesis; isopentenyl diphosphate biosynthesis via DXP pathway; isopentenyl diphosphate from 1-deoxy-D-xylulose 5-phosphate: step 5/6. Converts 2C-methyl-D-erythritol 2,4-cyclodiphosphate (ME-2,4cPP) into 1-hydroxy-2-methyl-2-(E)-butenyl 4-diphosphate. This Shouchella clausii (strain KSM-K16) (Alkalihalobacillus clausii) protein is 4-hydroxy-3-methylbut-2-en-1-yl diphosphate synthase (flavodoxin).